A 513-amino-acid polypeptide reads, in one-letter code: Flavonoid 3'-monooxygenase (513 aa).

A helical membrane pass occupies residues 1–21 (MATLFLTILLATVLFLILRIF). Topologically, residues 22–513 (SHRRNRSHNN…APNVYGLGSG (492 aa)) are cytoplasmic. Position 445 (Cys-445) interacts with heme.

The protein belongs to the cytochrome P450 family. Heme serves as cofactor. High expression in siliques and to a lower extent in stems, flowers and senescing leaves.

Its subcellular location is the endoplasmic reticulum membrane. It carries out the reaction a 3'-unsubstituted flavone + reduced [NADPH--hemoprotein reductase] + O2 = a 3'-hydroxyflavone + oxidized [NADPH--hemoprotein reductase] + H2O + H(+). The protein operates within secondary metabolite biosynthesis; flavonoid biosynthesis. In terms of biological role, catalyzes the 3'-hydroxylation of the flavonoid B-ring to the 3',4'-hydroxylated state. Convert naringenin to eriodictyol and dihydrokaempferol to dihydroquercetin. The protein is Flavonoid 3'-monooxygenase (CYP75B1) of Arabidopsis thaliana (Mouse-ear cress).